Consider the following 376-residue polypeptide: Ribonucleoside-diphosphate reductase subunit beta (376 aa).

Fe cation is bound by residues aspartate 85, glutamate 116, and histidine 119. Tyrosine 123 is a catalytic residue. Glutamate 205, glutamate 239, and histidine 242 together coordinate Fe cation.

Belongs to the ribonucleoside diphosphate reductase small chain family. As to quaternary structure, tetramer of two alpha and two beta subunits. It depends on Fe cation as a cofactor.

It catalyses the reaction a 2'-deoxyribonucleoside 5'-diphosphate + [thioredoxin]-disulfide + H2O = a ribonucleoside 5'-diphosphate + [thioredoxin]-dithiol. In terms of biological role, provides the precursors necessary for DNA synthesis. Catalyzes the biosynthesis of deoxyribonucleotides from the corresponding ribonucleotides. The chain is Ribonucleoside-diphosphate reductase subunit beta (nrdB) from Buchnera aphidicola subsp. Acyrthosiphon pisum (strain APS) (Acyrthosiphon pisum symbiotic bacterium).